We begin with the raw amino-acid sequence, 131 residues long: Leptin receptor gene-related protein (131 aa).

The next 4 helical transmembrane spans lie at 7–27 (LVGL…GCAL), 32–52 (VYWP…HFIA), 69–89 (LAYF…IILA), and 100–120 (GLVL…FLVF).

This sequence belongs to the OB-RGRP/VPS55 family.

It localises to the golgi apparatus membrane. The protein localises to the endosome membrane. Functionally, involved in protein trafficking. May be involved in the down-regulation of membrane protein levels. The sequence is that of Leptin receptor gene-related protein (LEPROT) from Gallus gallus (Chicken).